The chain runs to 124 residues: Ribonuclease pancreatic (124 aa).

Substrate is bound by residues Lys7 and Arg10. The active-site Proton acceptor is His12. Disulfide bonds link Cys26/Cys84, Cys40/Cys95, Cys58/Cys110, and Cys65/Cys72. Asn34 is a glycosylation site (N-linked (GlcNAc...) asparagine; partial). Substrate contacts are provided by residues 41 to 45 (KPVBT), Lys66, and Arg85. Residue His119 is the Proton donor of the active site.

This sequence belongs to the pancreatic ribonuclease family. In terms of assembly, monomer. Interacts with and forms tight 1:1 complexes with RNH1. Dimerization of two such complexes may occur. Interaction with RNH1 inhibits this protein. As to expression, pancreas.

The protein resides in the secreted. The enzyme catalyses an [RNA] containing cytidine + H2O = an [RNA]-3'-cytidine-3'-phosphate + a 5'-hydroxy-ribonucleotide-3'-[RNA].. It catalyses the reaction an [RNA] containing uridine + H2O = an [RNA]-3'-uridine-3'-phosphate + a 5'-hydroxy-ribonucleotide-3'-[RNA].. Its function is as follows. Endonuclease that catalyzes the cleavage of RNA on the 3' side of pyrimidine nucleotides. Acts on single-stranded and double-stranded RNA. The protein is Ribonuclease pancreatic (RNASE1) of Damaliscus korrigum (Topi).